The following is a 374-amino-acid chain: Chaperone protein DnaJ (374 aa).

Residues 6–70 (DYYDILGVSK…QKRAQYDQFG (65 aa)) enclose the J domain. The CR-type zinc finger occupies 135–217 (GKKTTIKYSR…CGGTGHTSQQ (83 aa)). Zn(2+)-binding residues include cysteine 148, cysteine 151, cysteine 165, cysteine 168, cysteine 191, cysteine 194, cysteine 205, and cysteine 208. CXXCXGXG motif repeat units lie at residues 148–155 (CKTCGGSG), 165–172 (CHKCNGTG), 191–198 (CDVCNGTG), and 205–212 (CPTCGGTG). 2 disordered regions span residues 308 to 328 (GTNF…GTGD) and 347 to 374 (EALK…KFMN).

This sequence belongs to the DnaJ family. Homodimer. It depends on Zn(2+) as a cofactor.

It localises to the cytoplasm. Its function is as follows. Participates actively in the response to hyperosmotic and heat shock by preventing the aggregation of stress-denatured proteins and by disaggregating proteins, also in an autonomous, DnaK-independent fashion. Unfolded proteins bind initially to DnaJ; upon interaction with the DnaJ-bound protein, DnaK hydrolyzes its bound ATP, resulting in the formation of a stable complex. GrpE releases ADP from DnaK; ATP binding to DnaK triggers the release of the substrate protein, thus completing the reaction cycle. Several rounds of ATP-dependent interactions between DnaJ, DnaK and GrpE are required for fully efficient folding. Also involved, together with DnaK and GrpE, in the DNA replication of plasmids through activation of initiation proteins. This Pediococcus pentosaceus (strain ATCC 25745 / CCUG 21536 / LMG 10740 / 183-1w) protein is Chaperone protein DnaJ.